Reading from the N-terminus, the 163-residue chain is NADPH-dependent 7-cyano-7-deazaguanine reductase (163 aa).

Over residues methionine 1 to arginine 10 the composition is skewed to basic residues. The interval methionine 1–histidine 23 is disordered. The Thioimide intermediate role is filled by cysteine 61. The Proton donor role is filled by aspartate 68. Substrate-binding positions include leucine 83–serine 85 and histidine 102–glutamate 103.

This sequence belongs to the GTP cyclohydrolase I family. QueF type 1 subfamily.

It is found in the cytoplasm. It catalyses the reaction 7-aminomethyl-7-carbaguanine + 2 NADP(+) = 7-cyano-7-deazaguanine + 2 NADPH + 3 H(+). The protein operates within tRNA modification; tRNA-queuosine biosynthesis. Catalyzes the NADPH-dependent reduction of 7-cyano-7-deazaguanine (preQ0) to 7-aminomethyl-7-deazaguanine (preQ1). The sequence is that of NADPH-dependent 7-cyano-7-deazaguanine reductase from Rhodopseudomonas palustris (strain BisA53).